Reading from the N-terminus, the 358-residue chain is Ornithine cyclodeaminase (358 aa).

R52 and K76 together coordinate L-ornithine. Residues T91, R119, 146-147 (AQ), D168, T208, 231-234 (VGGD), K238, and S299 each bind NAD(+). Residue R119 participates in L-ornithine binding. Residue D234 coordinates L-ornithine. D234 functions as the Proton donor/acceptor in the catalytic mechanism. An L-ornithine-binding site is contributed by V300.

Belongs to the ornithine cyclodeaminase/mu-crystallin family. It depends on NAD(+) as a cofactor.

The catalysed reaction is L-ornithine = L-proline + NH4(+). Its pathway is amino-acid biosynthesis; L-proline biosynthesis; L-proline from L-ornithine: step 1/1. Functionally, catalyzes the conversion of L-ornithine into L-proline with release of ammonia. The chain is Ornithine cyclodeaminase from Brucella suis biovar 1 (strain 1330).